Here is a 173-residue protein sequence, read N- to C-terminus: NADH-ubiquinone oxidoreductase chain 6 (173 aa).

Helical transmembrane passes span methionine 1–serine 21, tyrosine 27–glycine 47, valine 48–valine 68, valine 87–phenylalanine 107, phenylalanine 113–valine 133, and cysteine 139–leucine 159.

This sequence belongs to the complex I subunit 6 family.

The protein localises to the mitochondrion membrane. It carries out the reaction a ubiquinone + NADH + 5 H(+)(in) = a ubiquinol + NAD(+) + 4 H(+)(out). In terms of biological role, core subunit of the mitochondrial membrane respiratory chain NADH dehydrogenase (Complex I) that is believed to belong to the minimal assembly required for catalysis. Complex I functions in the transfer of electrons from NADH to the respiratory chain. The immediate electron acceptor for the enzyme is believed to be ubiquinone. The chain is NADH-ubiquinone oxidoreductase chain 6 (MT-ND6) from Alle alle (Dovekie).